Reading from the N-terminus, the 879-residue chain is Metabotropic glutamate receptor 3 (879 aa).

A signal peptide spans 1 to 22 (MKMLTRLQVLTLALFSKGFLLS). The Extracellular segment spans residues 23 to 576 (LGDHNFLRRE…EDYIRWEDAW (554 aa)). An intrachain disulfide couples C57 to C99. L-glutamate contacts are provided by residues S151 and 172-174 (AST). N209 is a glycosylation site (N-linked (GlcNAc...) asparagine). Position 222 (Y222) interacts with L-glutamate. 7 disulfides stabilise this stretch: C240–C527, C361–C373, C412–C419, C509–C528, C513–C531, C534–C546, and C549–C562. N292 is a glycosylation site (N-linked (GlcNAc...) asparagine). D301 contacts L-glutamate. K389 provides a ligand contact to L-glutamate. N-linked (GlcNAc...) asparagine glycosylation is found at N414 and N439. A helical transmembrane segment spans residues 577–599 (VIGPVTIACLGFMCTCMVVTVFI). The Cytoplasmic portion of the chain corresponds to 600–613 (KHNNTPLVKASGRE). Residues 614 to 634 (LCYILLFGVGLSYCMTFFFIA) traverse the membrane as a helical segment. Topologically, residues 635–645 (KPSPVICALRR) are extracellular. The chain crosses the membrane as a helical span at residues 646-664 (LGLGSSFAICYSALLTKTN). Topologically, residues 665 to 688 (CIARIFDGVKNGAQRPKFISPSSQ) are cytoplasmic. The chain crosses the membrane as a helical span at residues 689-709 (VFICLGLILVQIVMVSVWLIL). Residues 710–734 (EAPGTRRYTLAEKRETVILKCNVKD) lie on the Extracellular side of the membrane. Residues 735 to 756 (SSMLISLTYDVILVILCTVYAF) traverse the membrane as a helical segment. Topologically, residues 757 to 769 (KTRKCPENFNEAK) are cytoplasmic. A helical membrane pass occupies residues 770–792 (FIGFTMYTTCIIWLAFLPIFYVT). Over 793–802 (SSDYRVQTTT) the chain is Extracellular. A helical membrane pass occupies residues 803 to 828 (MCISVSLSGFVVLGCLFAPKVHIILF). The Cytoplasmic portion of the chain corresponds to 829–879 (QPQKNVVTHRLHLNRFSVSGTGTTYSQSSASTYVPTVCNGREVLDSTTSSL).

The protein belongs to the G-protein coupled receptor 3 family. Interacts with TAMALIN.

The protein localises to the cell membrane. Its function is as follows. G-protein coupled receptor for glutamate. Ligand binding causes a conformation change that triggers signaling via guanine nucleotide-binding proteins (G proteins) and modulates the activity of down-stream effectors. Signaling inhibits adenylate cyclase activity. The sequence is that of Metabotropic glutamate receptor 3 (GRM3) from Pongo abelii (Sumatran orangutan).